A 380-amino-acid chain; its full sequence is Crotonobetainyl-CoA reductase (380 aa).

The protein belongs to the acyl-CoA dehydrogenase family. Homotetramer. Requires FAD as cofactor.

The protein resides in the cytoplasm. The catalysed reaction is 4-(trimethylamino)butanoyl-CoA + oxidized [electron-transfer flavoprotein] + H(+) = crotonobetainyl-CoA + reduced [electron-transfer flavoprotein]. It functions in the pathway amine and polyamine metabolism; carnitine metabolism. In terms of biological role, catalyzes the reduction of crotonobetainyl-CoA to gamma-butyrobetainyl-CoA. In Salmonella typhi, this protein is Crotonobetainyl-CoA reductase.